A 102-amino-acid polypeptide reads, in one-letter code: Biotrophy-associated secreted protein 2 (102 aa).

Residues 1–19 (MVRVSTFAAILAMALSVTA) form the signal peptide. N46 is a glycosylation site (N-linked (GlcNAc...) asparagine).

The protein resides in the secreted. In terms of biological role, secreted effector involved in biotrophic colonization of plant cells. The protein is Biotrophy-associated secreted protein 2 of Pyricularia oryzae (strain 70-15 / ATCC MYA-4617 / FGSC 8958) (Rice blast fungus).